We begin with the raw amino-acid sequence, 377 residues long: Histone deacetylase 8 (377 aa).

Residues 5–336 (RVDVFWHEGM…LHAMLEGVLK (332 aa)) form a histone deacetylase region. The active-site Proton donor/acceptor is the H145. Zn(2+)-binding residues include D182, H184, and D274.

It belongs to the histone deacetylase family. Zn(2+) is required as a cofactor. Expressed in stems, leaves, flowers, siliques and mature seeds.

It localises to the nucleus. Its subcellular location is the cytoplasm. The enzyme catalyses N(6)-acetyl-L-lysyl-[histone] + H2O = L-lysyl-[histone] + acetate. Responsible for the deacetylation of lysine residues on the N-terminal part of the core histones (H2A, H2B, H3 and H4). Histone deacetylation gives a tag for epigenetic repression and plays an important role in transcriptional regulation, cell cycle progression and developmental events. Histone deacetylases act via the formation of large multiprotein complexes. This chain is Histone deacetylase 8, found in Arabidopsis thaliana (Mouse-ear cress).